The sequence spans 244 residues: WUSCHEL-related homeobox 3 (244 aa).

The segment at residues 4 to 68 is a DNA-binding region (homeobox; WUS-type); the sequence is VASTRWCPTP…NHKARDRQKL (65 aa).

Belongs to the WUS homeobox family. Expressed in aerial parts of seedlings, inflorescences and flowers at low level. Expressed in a restricted number of L1 cells at the lateral regions of flower primordia.

The protein localises to the nucleus. Its function is as follows. Probable transcription factor required to initiate organ founder cells in a lateral domain of shoot meristems. Involved in the lateral sepal axis-dependent development of flowers, probably by regulating the proliferation of L1 cells at the lateral region of flower primordia. Required for the formation of the margin cells of the first and second whorl organs. This chain is WUSCHEL-related homeobox 3 (WOX3), found in Arabidopsis thaliana (Mouse-ear cress).